Consider the following 263-residue polypeptide: Small ribosomal subunit protein uS15m (263 aa).

Residues 1-70 (MVLKSVFRST…VRQYARPSRK (70 aa)) constitute a mitochondrion transit peptide. Positions 238–251 (EREKQKAEEAERKK) are enriched in basic and acidic residues. The interval 238–263 (EREKQKAEEAERKKSSSSTNPQETAA) is disordered.

The protein belongs to the universal ribosomal protein uS15 family. As to quaternary structure, component of the mitochondrial ribosome small subunit (28S) which comprises a 12S rRNA and about 30 distinct proteins.

The protein resides in the mitochondrion. This is Small ribosomal subunit protein uS15m (mrps15) from Danio rerio (Zebrafish).